The primary structure comprises 300 residues: Ribosomal protein L11 methyltransferase (300 aa).

Residues Thr-152, Gly-173, Asp-195, and Asn-234 each contribute to the S-adenosyl-L-methionine site.

This sequence belongs to the methyltransferase superfamily. PrmA family.

It localises to the cytoplasm. The enzyme catalyses L-lysyl-[protein] + 3 S-adenosyl-L-methionine = N(6),N(6),N(6)-trimethyl-L-lysyl-[protein] + 3 S-adenosyl-L-homocysteine + 3 H(+). Methylates ribosomal protein L11. This chain is Ribosomal protein L11 methyltransferase, found in Burkholderia pseudomallei (strain 1710b).